The chain runs to 193 residues: Putative deoxynucleotide monophosphate kinase (193 aa).

K10 provides a ligand contact to dGMP. ATP-binding residues include G13 and T16. Positions 36, 37, 58, 122, 124, 128, and 155 each coordinate dGMP.

The protein belongs to the dNMP kinase family.

The enzyme catalyses a 2'-deoxyribonucleoside 5'-phosphate + ATP = a 2'-deoxyribonucleoside 5'-diphosphate + ADP. In Acanthamoeba polyphaga mimivirus (APMV), this protein is Putative deoxynucleotide monophosphate kinase.